Consider the following 279-residue polypeptide: NADPH-dependent 7-cyano-7-deazaguanine reductase (279 aa).

86–88 provides a ligand contact to substrate; it reads VES. 88-89 is an NADPH binding site; the sequence is SK. The Thioimide intermediate role is filled by C187. Catalysis depends on D194, which acts as the Proton donor. 226 to 227 is a binding site for substrate; that stretch reads HE. 255–256 provides a ligand contact to NADPH; the sequence is RG.

It belongs to the GTP cyclohydrolase I family. QueF type 2 subfamily. In terms of assembly, homodimer.

The protein resides in the cytoplasm. The enzyme catalyses 7-aminomethyl-7-carbaguanine + 2 NADP(+) = 7-cyano-7-deazaguanine + 2 NADPH + 3 H(+). The protein operates within tRNA modification; tRNA-queuosine biosynthesis. Functionally, catalyzes the NADPH-dependent reduction of 7-cyano-7-deazaguanine (preQ0) to 7-aminomethyl-7-deazaguanine (preQ1). The protein is NADPH-dependent 7-cyano-7-deazaguanine reductase of Actinobacillus succinogenes (strain ATCC 55618 / DSM 22257 / CCUG 43843 / 130Z).